Consider the following 142-residue polypeptide: Large ribosomal subunit protein uL16 (142 aa).

This sequence belongs to the universal ribosomal protein uL16 family. In terms of assembly, part of the 50S ribosomal subunit.

Binds 23S rRNA and is also seen to make contacts with the A and possibly P site tRNAs. This Thermosipho africanus (strain TCF52B) protein is Large ribosomal subunit protein uL16.